Reading from the N-terminus, the 101-residue chain is Small ribosomal subunit protein bS18c (101 aa).

The protein belongs to the bacterial ribosomal protein bS18 family. As to quaternary structure, part of the 30S ribosomal subunit.

It is found in the plastid. The protein localises to the chloroplast. This Guizotia abyssinica (Niger) protein is Small ribosomal subunit protein bS18c.